A 581-amino-acid chain; its full sequence is Proline--tRNA ligase (581 aa).

The protein belongs to the class-II aminoacyl-tRNA synthetase family. ProS type 1 subfamily. In terms of assembly, homodimer.

Its subcellular location is the cytoplasm. The enzyme catalyses tRNA(Pro) + L-proline + ATP = L-prolyl-tRNA(Pro) + AMP + diphosphate. In terms of biological role, catalyzes the attachment of proline to tRNA(Pro) in a two-step reaction: proline is first activated by ATP to form Pro-AMP and then transferred to the acceptor end of tRNA(Pro). As ProRS can inadvertently accommodate and process non-cognate amino acids such as alanine and cysteine, to avoid such errors it has two additional distinct editing activities against alanine. One activity is designated as 'pretransfer' editing and involves the tRNA(Pro)-independent hydrolysis of activated Ala-AMP. The other activity is designated 'posttransfer' editing and involves deacylation of mischarged Ala-tRNA(Pro). The misacylated Cys-tRNA(Pro) is not edited by ProRS. This chain is Proline--tRNA ligase, found in Blochmanniella pennsylvanica (strain BPEN).